The sequence spans 614 residues: Probable glutamate--tRNA ligase, cytoplasmic (614 aa).

130 to 132 is a binding site for L-glutamate; the sequence is RFA. The 'HIGH' region signature appears at 135 to 144; the sequence is PSGCLHIGHL. Histidine 140 serves as a coordination point for ATP. L-glutamate is bound by residues aspartate 166, 303 to 307, and arginine 321; that span reads YDFVC. ATP-binding positions include glutamate 324 and 359–363; that span reads VLSKR. Positions 359-363 match the 'KMSKS' region motif; the sequence is VLSKR.

It belongs to the class-I aminoacyl-tRNA synthetase family. Glutamate--tRNA ligase type 2 subfamily.

It localises to the cytoplasm. The enzyme catalyses tRNA(Glu) + L-glutamate + ATP = L-glutamyl-tRNA(Glu) + AMP + diphosphate. The sequence is that of Probable glutamate--tRNA ligase, cytoplasmic from Vairimorpha ceranae (strain BRL01) (Microsporidian parasite).